The following is a 154-amino-acid chain: Resuscitation-promoting factor RpfD (154 aa).

A helical transmembrane segment spans residues 21 to 41; sequence IVCTVFIETAVVATMFVALLG.

Belongs to the transglycosylase family. Rpf subfamily.

The protein resides in the cell membrane. Its function is as follows. Factor that stimulates resuscitation of dormant cells. Has peptidoglycan (PG) hydrolytic activity. PG fragments could either directly activate the resuscitation pathway of dormant bacteria or serve as a substrate for endogenous Rpf, resulting in low molecular weight products with resuscitation activity. This chain is Resuscitation-promoting factor RpfD (rpfD), found in Mycobacterium tuberculosis (strain CDC 1551 / Oshkosh).